The chain runs to 545 residues: Chaperonin GroEL 2 (545 aa).

ATP contacts are provided by residues 29–32 (TLGP), 86–90 (DGTTT), Gly413, 479–481 (NAA), and Asp495.

It belongs to the chaperonin (HSP60) family. Forms a cylinder of 14 subunits composed of two heptameric rings stacked back-to-back. Interacts with the co-chaperonin GroES.

It is found in the cytoplasm. It catalyses the reaction ATP + H2O + a folded polypeptide = ADP + phosphate + an unfolded polypeptide.. Together with its co-chaperonin GroES, plays an essential role in assisting protein folding. The GroEL-GroES system forms a nano-cage that allows encapsulation of the non-native substrate proteins and provides a physical environment optimized to promote and accelerate protein folding. In Prochlorococcus marinus (strain SARG / CCMP1375 / SS120), this protein is Chaperonin GroEL 2.